A 63-amino-acid chain; its full sequence is MECYRCGVSGCHLKITCSAEETFCYKWLNKISNERWLGCAKTCTEIDTWNVYNKCCTTNLCNT.

Cystine bridges form between Cys-3–Cys-24, Cys-6–Cys-11, Cys-17–Cys-39, Cys-43–Cys-55, and Cys-56–Cys-61.

Expressed by the venom gland.

The protein resides in the secreted. This toxin is described as enhancing presynaptic acetylcholine release, but neither experimental results, nor references to other sources are available. The polypeptide is Bucandin (Bungarus candidus (Malayan krait)).